Consider the following 443-residue polypeptide: Ribulose bisphosphate carboxylase large chain (443 aa).

N6,N6,N6-trimethyllysine is present on Lys3. The substrate site is built by Asn112 and Thr162. Lys164 serves as the catalytic Proton acceptor. Position 166 (Lys166) interacts with substrate. Mg(2+)-binding residues include Lys190, Asp192, and Glu193. At Lys190 the chain carries N6-carboxylysine. The Proton acceptor role is filled by His283. The substrate site is built by Arg284, His316, and Ser368.

The protein belongs to the RuBisCO large chain family. Type I subfamily. As to quaternary structure, heterohexadecamer of 8 large chains and 8 small chains; disulfide-linked. The disulfide link is formed within the large subunit homodimers. It depends on Mg(2+) as a cofactor. The disulfide bond which can form in the large chain dimeric partners within the hexadecamer appears to be associated with oxidative stress and protein turnover.

It is found in the plastid. Its subcellular location is the chloroplast. It carries out the reaction 2 (2R)-3-phosphoglycerate + 2 H(+) = D-ribulose 1,5-bisphosphate + CO2 + H2O. It catalyses the reaction D-ribulose 1,5-bisphosphate + O2 = 2-phosphoglycolate + (2R)-3-phosphoglycerate + 2 H(+). RuBisCO catalyzes two reactions: the carboxylation of D-ribulose 1,5-bisphosphate, the primary event in carbon dioxide fixation, as well as the oxidative fragmentation of the pentose substrate in the photorespiration process. Both reactions occur simultaneously and in competition at the same active site. This Iris germanica (Bearded iris) protein is Ribulose bisphosphate carboxylase large chain.